The primary structure comprises 66 residues: DNA gyrase inhibitor YacG (66 aa).

Zn(2+)-binding residues include C9, C12, C28, and C32.

Belongs to the DNA gyrase inhibitor YacG family. As to quaternary structure, interacts with GyrB. It depends on Zn(2+) as a cofactor.

In terms of biological role, inhibits all the catalytic activities of DNA gyrase by preventing its interaction with DNA. Acts by binding directly to the C-terminal domain of GyrB, which probably disrupts DNA binding by the gyrase. The chain is DNA gyrase inhibitor YacG from Pseudomonas aeruginosa (strain LESB58).